The following is a 22-amino-acid chain: Zinc metalloproteinase oxiagin (22 aa).

The 9-residue stretch at 14-22 (CYIEFYVVV) folds into the Peptidase M12B domain.

Belongs to the venom metalloproteinase (M12B) family. P-III subfamily. P-IIId sub-subfamily. Heterotrimer; disulfide-linked. The heterotrimer consists of 1 metalloproteinase chain and 2 lectin chains. Zn(2+) is required as a cofactor. In terms of processing, N-glycosylated. As to expression, expressed by the venom gland.

Its subcellular location is the secreted. Functionally, snake venom metalloproteinase that inhibits the classical complement pathway dose-dependently. It acts by binding to carbohydrates of IgG within the antibody-sensitized sheep erythrocytes (EA) complex, and thus prevents interaction of component C2 with immobilized C4b. Also induces cation-independent hemagglutination that can be prevented by D-galactose pretreatment. This chain is Zinc metalloproteinase oxiagin, found in Naja oxiana (Central Asian cobra).